The following is a 339-amino-acid chain: Dihydroorotate dehydrogenase (quinone) (339 aa).

Residues 64-68 and Thr-88 each bind FMN; that span reads AGADK. Position 68 (Lys-68) interacts with substrate. 113-117 contacts substrate; sequence NRNGF. Positions 141 and 174 each coordinate FMN. Asn-174 is a binding site for substrate. Ser-177 (nucleophile) is an active-site residue. Residue Asn-179 coordinates substrate. FMN contacts are provided by Lys-219 and Thr-247. 248–249 provides a ligand contact to substrate; sequence NT. FMN is bound by residues Gly-270, Gly-299, and 320 to 321; that span reads YS.

It belongs to the dihydroorotate dehydrogenase family. Type 2 subfamily. Monomer. FMN is required as a cofactor.

The protein resides in the cell membrane. The catalysed reaction is (S)-dihydroorotate + a quinone = orotate + a quinol. The protein operates within pyrimidine metabolism; UMP biosynthesis via de novo pathway; orotate from (S)-dihydroorotate (quinone route): step 1/1. Catalyzes the conversion of dihydroorotate to orotate with quinone as electron acceptor. In Haemophilus influenzae (strain PittEE), this protein is Dihydroorotate dehydrogenase (quinone).